The sequence spans 515 residues: Low affinity ammonium transporter (515 aa).

The Extracellular segment spans residues 1–78; sequence MSTSSSVTQK…IIGNSFGTTN (78 aa). Residues 79–99 form a helical membrane-spanning segment; the sequence is AGQLSWFASAYSLTVGTFILI. The Cytoplasmic portion of the chain corresponds to 100–111; that stretch reads AGRLGDIFGHKK. Residues 112 to 132 form a helical membrane-spanning segment; sequence FFVLGFFWYALWSLLAGFSVY. Topologically, residues 133–140 are extracellular; sequence SNQIFFDC. The helical transmembrane segment at 141–161 threads the bilayer; that stretch reads CRAFQGMGPAFLLPNAIAILG. Over 162-171 the chain is Cytoplasmic; it reads RTYKPGRRKN. Residues 172-192 form a helical membrane-spanning segment; the sequence is MVFSLFGASAPGGFFLGAVFS. The Extracellular segment spans residues 193–202; it reads SMLGQLAWWP. The helical transmembrane segment at 203–223 threads the bilayer; the sequence is WAYWIMGIACFVLAVAGYFVI. The Cytoplasmic portion of the chain corresponds to 224–241; it reads PHTPMPSRDASSFKLLER. Residues 242–262 traverse the membrane as a helical segment; the sequence is IDFAGSVTGVVGLILFNFAWN. Residues 263 to 270 lie on the Extracellular side of the membrane; sequence QGPVVGWQ. The helical transmembrane segment at 271-291 threads the bilayer; it reads TPYTYALLIVGTFFLVIFAYI. The Cytoplasmic portion of the chain corresponds to 292-310; it reads ESRAAFPLLPFAALSSDTA. A helical transmembrane segment spans residues 311 to 331; that stretch reads FVLSCIAAGWASFGIWIFYTW. Over 332–346 the chain is Extracellular; that stretch reads QFMEDSRGQTPLLSS. The helical transmembrane segment at 347-367 threads the bilayer; it reads AQFSPVAISGFCAAVTTGFLL. Residues 368 to 374 lie on the Cytoplasmic side of the membrane; it reads SHTPPST. A helical membrane pass occupies residues 375–395; it reads VMLFAMTAFTVGTILIATAPV. The Extracellular segment spans residues 396 to 403; it reads HQTYWAQT. A helical transmembrane segment spans residues 404-424; that stretch reads FVSIIVMPWGMDMSFPAATIM. Residues 425-435 lie on the Cytoplasmic side of the membrane; it reads LSDSMPHEHQG. A helical transmembrane segment spans residues 436–456; the sequence is LAASLVNTVVNYSISIGLGIA. Over 457 to 479 the chain is Extracellular; that stretch reads GTIESRVNDGGAKPLKGYRCSWY. The chain crosses the membrane as a helical span at residues 480–500; that stretch reads MGIGLSGLGIFVAATYAWSTF. Residues 501-515 are Cytoplasmic-facing; sequence MKSKKRISEKQHFIE.

It belongs to the major facilitator superfamily.

It localises to the cell membrane. Functionally, low affinity ammonium transporter of the plasma membrane. May be involved in drug resistance through pumping them out of the cell. In Saccharomyces cerevisiae (strain ATCC 204508 / S288c) (Baker's yeast), this protein is Low affinity ammonium transporter.